A 235-amino-acid chain; its full sequence is Probable transcriptional regulatory protein Ccur92_05350 (235 aa).

Belongs to the TACO1 family.

Its subcellular location is the cytoplasm. This is Probable transcriptional regulatory protein Ccur92_05350 from Campylobacter curvus (strain 525.92).